The sequence spans 354 residues: Histidinol-phosphate aminotransferase (354 aa).

Lysine 222 is modified (N6-(pyridoxal phosphate)lysine).

This sequence belongs to the class-II pyridoxal-phosphate-dependent aminotransferase family. Histidinol-phosphate aminotransferase subfamily. As to quaternary structure, homodimer. The cofactor is pyridoxal 5'-phosphate.

It catalyses the reaction L-histidinol phosphate + 2-oxoglutarate = 3-(imidazol-4-yl)-2-oxopropyl phosphate + L-glutamate. The protein operates within amino-acid biosynthesis; L-histidine biosynthesis; L-histidine from 5-phospho-alpha-D-ribose 1-diphosphate: step 7/9. The chain is Histidinol-phosphate aminotransferase from Leuconostoc citreum (strain KM20).